The primary structure comprises 137 residues: Proofreading thioesterase EntH (137 aa).

Glutamate 63 serves as the catalytic Nucleophile or proton acceptor.

It belongs to the thioesterase PaaI family. In terms of assembly, homotetramer. Dimer of dimers. Interacts specifically with the aryl carrier protein (ArCP) domain of EntB.

The protein resides in the cytoplasm. The protein operates within siderophore biosynthesis; enterobactin biosynthesis. Its function is as follows. Required for optimal enterobactin synthesis. Acts as a proofreading enzyme that prevents EntB misacylation by hydrolyzing the thioester bound existing between EntB and wrongly charged molecules. The sequence is that of Proofreading thioesterase EntH from Salmonella paratyphi A (strain AKU_12601).